The chain runs to 479 residues: UDP-N-acetylmuramoyl-L-alanyl-D-glutamate--2,6-diaminopimelate ligase (479 aa).

Ser21 is a binding site for UDP-N-acetyl-alpha-D-muramoyl-L-alanyl-D-glutamate. 98–104 lines the ATP pocket; it reads GTNGKSS. UDP-N-acetyl-alpha-D-muramoyl-L-alanyl-D-glutamate contacts are provided by residues 144–145, Ser171, Gln177, and Arg179; that span reads TT. Lys211 is subject to N6-carboxylysine. Meso-2,6-diaminopimelate contacts are provided by residues Arg372, 396–399, Gly446, and Glu450; that span reads DNPR. Positions 396–399 match the Meso-diaminopimelate recognition motif motif; sequence DNPR.

The protein belongs to the MurCDEF family. MurE subfamily. Mg(2+) serves as cofactor. Post-translationally, carboxylation is probably crucial for Mg(2+) binding and, consequently, for the gamma-phosphate positioning of ATP.

The protein localises to the cytoplasm. The catalysed reaction is UDP-N-acetyl-alpha-D-muramoyl-L-alanyl-D-glutamate + meso-2,6-diaminopimelate + ATP = UDP-N-acetyl-alpha-D-muramoyl-L-alanyl-gamma-D-glutamyl-meso-2,6-diaminopimelate + ADP + phosphate + H(+). It participates in cell wall biogenesis; peptidoglycan biosynthesis. Catalyzes the addition of meso-diaminopimelic acid to the nucleotide precursor UDP-N-acetylmuramoyl-L-alanyl-D-glutamate (UMAG) in the biosynthesis of bacterial cell-wall peptidoglycan. This chain is UDP-N-acetylmuramoyl-L-alanyl-D-glutamate--2,6-diaminopimelate ligase, found in Rickettsia conorii (strain ATCC VR-613 / Malish 7).